A 331-amino-acid chain; its full sequence is MLSPERLALPDYEYLAQRHVLTYMEDAVCQLLENREDISQYGIARFFTDYFNSVCQGTHILFREFSFIQATPHNRASFLRAFWRCFRTVGKNGDLLTMREYHCLLQLLCPDFPLELTQKAARIVLMDDAMDCLMSFSDFLFAFQIQFYYSEFLESVAAIYQDLLSGKNPNTVIVPTSSSGQHRQRPALGDAGMLDGVEASLFYQRLENLCDRHKYSCPPPALVKEILSNVQRLTFYGFLVALSKHHGINQALGALPDKGDLMHDPAMDEELERLLVQVPGLVNSITATSEASCLPSRTPPRVGSPWKPLHRSRKLDAESDGSTEETDESET.

The required for interaction with PCM1 stretch occupies residues 1 to 111 (MLSPERLALP…HCLLQLLCPD (111 aa)). Positions 1-225 (MLSPERLALP…SCPPPALVKE (225 aa)) are required for interaction with TPGS1, LRRC49, and TTLL1. Residues 112-331 (FPLELTQKAA…STEETDESET (220 aa)) form a required for interaction with TPGS2 region. The tract at residues 292–331 (SCLPSRTPPRVGSPWKPLHRSRKLDAESDGSTEETDESET) is disordered. A compositionally biased stretch (acidic residues) spans 318–331 (ESDGSTEETDESET). Ser-319 carries the post-translational modification Phosphoserine.

This sequence belongs to the CSTPP1 family. As to quaternary structure, interacts with PCM1. Interacts with TTLL1, TPGS1, TPGS2 and LRRC49; the interactions link CSTPP1 to the complex TPGC. Binds to alpha-tubulin.

It localises to the cytoplasm. Its subcellular location is the cytoskeleton. It is found in the microtubule organizing center. The protein resides in the centrosome. The protein localises to the centriolar satellite. Regulator of the tubulin polyglutamylase complex (TPGC) that controls cytoskeletal organization, nuclear shape, and cilium disassembly by balancing microtubule and actin assembly. Regulates the assembly and stability of the TPGC and thereby modulates polyglutamylation of the microtubule, which antagonizes MAP4 binding. The chain is Centriolar satellite-associated tubulin polyglutamylase complex regulator 1 from Mus musculus (Mouse).